The sequence spans 232 residues: Orotidine 5'-phosphate decarboxylase (232 aa).

Substrate contacts are provided by residues aspartate 12, lysine 34, 61–70 (DMKLLDIDNT), threonine 116, arginine 177, glutamine 186, glycine 206, and arginine 207. Lysine 63 serves as the catalytic Proton donor.

Belongs to the OMP decarboxylase family. Type 1 subfamily. In terms of assembly, homodimer.

The catalysed reaction is orotidine 5'-phosphate + H(+) = UMP + CO2. It functions in the pathway pyrimidine metabolism; UMP biosynthesis via de novo pathway; UMP from orotate: step 2/2. Functionally, catalyzes the decarboxylation of orotidine 5'-monophosphate (OMP) to uridine 5'-monophosphate (UMP). The polypeptide is Orotidine 5'-phosphate decarboxylase (Sinorhizobium medicae (strain WSM419) (Ensifer medicae)).